The chain runs to 351 residues: Anthranilate phosphoribosyltransferase (351 aa).

Residues glycine 80, 83–84 (GD), threonine 88, 90–93 (NIST), 108–116 (KHGNRSVTS), and serine 120 each bind 5-phospho-alpha-D-ribose 1-diphosphate. Position 80 (glycine 80) interacts with anthranilate. Serine 92 lines the Mg(2+) pocket. Asparagine 111 is a binding site for anthranilate. Arginine 166 provides a ligand contact to anthranilate. 2 residues coordinate Mg(2+): aspartate 229 and glutamate 230.

This sequence belongs to the anthranilate phosphoribosyltransferase family. As to quaternary structure, homodimer. It depends on Mg(2+) as a cofactor.

The catalysed reaction is N-(5-phospho-beta-D-ribosyl)anthranilate + diphosphate = 5-phospho-alpha-D-ribose 1-diphosphate + anthranilate. It participates in amino-acid biosynthesis; L-tryptophan biosynthesis; L-tryptophan from chorismate: step 2/5. In terms of biological role, catalyzes the transfer of the phosphoribosyl group of 5-phosphorylribose-1-pyrophosphate (PRPP) to anthranilate to yield N-(5'-phosphoribosyl)-anthranilate (PRA). The chain is Anthranilate phosphoribosyltransferase from Chlorobium phaeovibrioides (strain DSM 265 / 1930) (Prosthecochloris vibrioformis (strain DSM 265)).